Reading from the N-terminus, the 211-residue chain is Ribonuclease MRP protein subunit rmp1 (211 aa).

A helical transmembrane segment spans residues 73 to 93; the sequence is PALGLVLLGILARVWFVMGGI. At S156 the chain carries Phosphoserine. Positions 178–211 are disordered; the sequence is SQGTKRKSKNSNSTVKKKKKRARKGRDEIDDIFG. Residues 181–201 are compositionally biased toward basic residues; it reads TKRKSKNSNSTVKKKKKRARK.

As to quaternary structure, component of RNase MRP complex which consists of an RNA moiety and at least 10 protein subunits.

Its subcellular location is the membrane. The protein resides in the nucleus. It localises to the nucleolus. Functions as part of ribonuclease MRP (RNase MRP), which is involved in rRNA processing in mitochondria. The protein is Ribonuclease MRP protein subunit rmp1 of Schizosaccharomyces pombe (strain 972 / ATCC 24843) (Fission yeast).